We begin with the raw amino-acid sequence, 390 residues long: Glucose-fructose oxidoreductase domain-containing protein 1 (390 aa).

The first 21 residues, 1–21 (MLPGVGVFGTSLTSRVIIPLL), serve as a signal peptide directing secretion. N161, N270, and N354 each carry an N-linked (GlcNAc...) asparagine glycan.

This sequence belongs to the Gfo/Idh/MocA family. In terms of assembly, homodimer.

The protein resides in the secreted. Functionally, probably catalytically inactive enzyme. Does not bind NAD or NADP. This Xenopus tropicalis (Western clawed frog) protein is Glucose-fructose oxidoreductase domain-containing protein 1 (gfod1).